A 348-amino-acid chain; its full sequence is MSETTDYGASNTGANEESLRMVSSQPIGNEPVSDEELRPHVLGGFIGQPRLKAQLQLFLDAARKRDVPPDHILLAGPPGLGKTTLAMIVANELEVPIRVTSGPAVQHAGDLASILSSLDVGEVLFIDEIHRLPRAAEELLYIAMEDFRVDVMVGKGPGASSIPLTLPRFTVIGATTREGMLPSPLRARFGFTAHLDFYPHEELEKLIERSANVLGVNLDTGSAHELALRSRGTPRIANRLLRRVRDWAIVHDLIVVRPDDVKEALALYQIDSEGLDRLDIAVLNAIVRNFNGGPVGLNNLAAMVGEESETVETVCEPYLVREGFMIRTPKGRVATELADIIFGNYAQR.

Positions 4-198 are large ATPase domain (RuvB-L); sequence TTDYGASNTG…FGFTAHLDFY (195 aa). ATP contacts are provided by residues Leu37, Arg38, Gly79, Lys82, Thr83, Thr84, 145–147, Arg188, Tyr198, and Arg235; that span reads EDF. Thr83 lines the Mg(2+) pocket. Residues 199–269 form a small ATPAse domain (RuvB-S) region; it reads PHEELEKLIE…DVKEALALYQ (71 aa). Residues 272-348 are head domain (RuvB-H); the sequence is SEGLDRLDIA…DIIFGNYAQR (77 aa). DNA contacts are provided by Arg327 and Arg332.

Belongs to the RuvB family. Homohexamer. Forms an RuvA(8)-RuvB(12)-Holliday junction (HJ) complex. HJ DNA is sandwiched between 2 RuvA tetramers; dsDNA enters through RuvA and exits via RuvB. An RuvB hexamer assembles on each DNA strand where it exits the tetramer. Each RuvB hexamer is contacted by two RuvA subunits (via domain III) on 2 adjacent RuvB subunits; this complex drives branch migration. In the full resolvosome a probable DNA-RuvA(4)-RuvB(12)-RuvC(2) complex forms which resolves the HJ.

It localises to the cytoplasm. It catalyses the reaction ATP + H2O = ADP + phosphate + H(+). In terms of biological role, the RuvA-RuvB-RuvC complex processes Holliday junction (HJ) DNA during genetic recombination and DNA repair, while the RuvA-RuvB complex plays an important role in the rescue of blocked DNA replication forks via replication fork reversal (RFR). RuvA specifically binds to HJ cruciform DNA, conferring on it an open structure. The RuvB hexamer acts as an ATP-dependent pump, pulling dsDNA into and through the RuvAB complex. RuvB forms 2 homohexamers on either side of HJ DNA bound by 1 or 2 RuvA tetramers; 4 subunits per hexamer contact DNA at a time. Coordinated motions by a converter formed by DNA-disengaged RuvB subunits stimulates ATP hydrolysis and nucleotide exchange. Immobilization of the converter enables RuvB to convert the ATP-contained energy into a lever motion, pulling 2 nucleotides of DNA out of the RuvA tetramer per ATP hydrolyzed, thus driving DNA branch migration. The RuvB motors rotate together with the DNA substrate, which together with the progressing nucleotide cycle form the mechanistic basis for DNA recombination by continuous HJ branch migration. Branch migration allows RuvC to scan DNA until it finds its consensus sequence, where it cleaves and resolves cruciform DNA. The protein is Holliday junction branch migration complex subunit RuvB of Bifidobacterium longum (strain DJO10A).